The chain runs to 843 residues: Lon protease (843 aa).

Residues 1 to 16 (MRERKETAMSDKEKKG) are compositionally biased toward basic and acidic residues. The tract at residues 1–22 (MRERKETAMSDKEKKGAGAGAQ) is disordered. In terms of domain architecture, Lon N-terminal spans 42 to 236 (LPILPLRNSV…LVLELLNRKR (195 aa)). Position 388–395 (388–395 (GPPGVGKT)) interacts with ATP. Residues 627–808 (TEIAGVATGL…DEVLQAALEE (182 aa)) enclose the Lon proteolytic domain. Catalysis depends on residues serine 714 and lysine 757. A disordered region spans residues 805-843 (ALEENPVGRKPPAAPEPEGEKKPGATPTPPAKKPDEIRV).

Belongs to the peptidase S16 family. Homohexamer. Organized in a ring with a central cavity.

It is found in the cytoplasm. The enzyme catalyses Hydrolysis of proteins in presence of ATP.. Functionally, ATP-dependent serine protease that mediates the selective degradation of mutant and abnormal proteins as well as certain short-lived regulatory proteins. Required for cellular homeostasis and for survival from DNA damage and developmental changes induced by stress. Degrades polypeptides processively to yield small peptide fragments that are 5 to 10 amino acids long. Binds to DNA in a double-stranded, site-specific manner. The chain is Lon protease from Anaeromyxobacter dehalogenans (strain 2CP-C).